The sequence spans 594 residues: Isocitrate dehydrogenase kinase/phosphatase (594 aa).

ATP is bound by residues 315 to 321 and Lys336; that span reads APGIRGM. Asp371 is a catalytic residue.

The protein belongs to the AceK family.

It is found in the cytoplasm. It carries out the reaction L-seryl-[isocitrate dehydrogenase] + ATP = O-phospho-L-seryl-[isocitrate dehydrogenase] + ADP + H(+). Bifunctional enzyme which can phosphorylate or dephosphorylate isocitrate dehydrogenase (IDH) on a specific serine residue. This is a regulatory mechanism which enables bacteria to bypass the Krebs cycle via the glyoxylate shunt in response to the source of carbon. When bacteria are grown on glucose, IDH is fully active and unphosphorylated, but when grown on acetate or ethanol, the activity of IDH declines drastically concomitant with its phosphorylation. In Klebsiella pneumoniae subsp. pneumoniae (strain ATCC 700721 / MGH 78578), this protein is Isocitrate dehydrogenase kinase/phosphatase.